A 376-amino-acid chain; its full sequence is Succinyl-diaminopimelate desuccinylase (376 aa).

Residue histidine 67 participates in Zn(2+) binding. Aspartate 69 is a catalytic residue. Aspartate 100 provides a ligand contact to Zn(2+). The active-site Proton acceptor is glutamate 134. 3 residues coordinate Zn(2+): glutamate 135, glutamate 163, and histidine 349.

It belongs to the peptidase M20A family. DapE subfamily. Homodimer. It depends on Zn(2+) as a cofactor. The cofactor is Co(2+).

The catalysed reaction is N-succinyl-(2S,6S)-2,6-diaminopimelate + H2O = (2S,6S)-2,6-diaminopimelate + succinate. Its pathway is amino-acid biosynthesis; L-lysine biosynthesis via DAP pathway; LL-2,6-diaminopimelate from (S)-tetrahydrodipicolinate (succinylase route): step 3/3. Its function is as follows. Catalyzes the hydrolysis of N-succinyl-L,L-diaminopimelic acid (SDAP), forming succinate and LL-2,6-diaminopimelate (DAP), an intermediate involved in the bacterial biosynthesis of lysine and meso-diaminopimelic acid, an essential component of bacterial cell walls. This chain is Succinyl-diaminopimelate desuccinylase, found in Nitrosomonas europaea (strain ATCC 19718 / CIP 103999 / KCTC 2705 / NBRC 14298).